A 277-amino-acid chain; its full sequence is Nuclear egress protein 2 (277 aa).

The Perinuclear space segment spans residues 1-250 (MEVIPNINSR…ASGECVTTIR (250 aa)). The helical transmembrane segment at 251–271 (IPRYIVMLWIFSVLLAMVTWG) threads the bilayer. Residues 272-277 (SYRLYS) lie on the Nuclear side of the membrane.

It belongs to the herpesviridae NEC2 protein family. In terms of assembly, forms a heterohexameric complex with NEC1. In terms of processing, phosphorylated.

It is found in the host nucleus inner membrane. Functionally, plays an essential role in virion nuclear egress, the first step of virion release from infected cell. Within the host nucleus, NEC1 interacts with the newly formed capsid through the vertexes and directs it to the inner nuclear membrane by associating with NEC2. Induces the budding of the capsid at the inner nuclear membrane as well as its envelopment into the perinuclear space. There, the NEC1/NEC2 complex promotes the fusion of the enveloped capsid with the outer nuclear membrane and the subsequent release of the viral capsid into the cytoplasm where it will reach the secondary budding sites in the host Golgi or trans-Golgi network. This Gallid herpesvirus 2 (strain Chicken/Md5/ATCC VR-987) (GaHV-2) protein is Nuclear egress protein 2.